Consider the following 553-residue polypeptide: Cytochrome P450 86A2 (553 aa).

Residues 2 to 20 (DVSNTMLLVAVVAAYWLWF) traverse the membrane as a helical segment. Cys459 contacts heme.

The protein belongs to the cytochrome P450 family. Heme is required as a cofactor. Expressed in leaves, stems, flowers and siliques. Expressed at low levels in roots. Expressed in guard cells of cotyledons and leaves.

The protein resides in the membrane. It catalyses the reaction an organic molecule + reduced [NADPH--hemoprotein reductase] + O2 = an alcohol + oxidized [NADPH--hemoprotein reductase] + H2O + H(+). Functionally, catalyzes the omega-hydroxylation of various fatty acids (FA). Acts on saturated and unsaturated fatty acids with chain lengths from C12 to C18. Plays a major role in the biosynthesis of extracellular lipids. Involved in the biosynthesis of hydroxylated fatty acids required for cutin biosynthesis, cuticle development and repression of bacterial type III gene expression. The chain is Cytochrome P450 86A2 (CYP86A2) from Arabidopsis thaliana (Mouse-ear cress).